The primary structure comprises 503 residues: MKIVVTKSAVKKLEADILAFPFCSGELKKQDAGVLSDFDISAHALKDFKAESGEIVLFYSSSEGHLIARVALLGLGDGKDPDDFRKAAASLAAKAMTMNLQRIAVDCSRFGTIAEDSKKRVGKLAETFVEGCFSGSYKFDRLKSGKLDKKKDDKKVKGISELILRFDASVFADAEEGAAQGEIVGSCQLMARDLVNLPGNYLQAEDIAKAAQDSGSRNGFAVKVLRKKEMEDLAMGGLLAVNQGSTHPPTFSILDYKPEGKAKAVVALVGKGVTFDSGGISLKPSEGMGEMKSDMSGAACVIAAVEAAARLGLSLRVIGLIPATDNMPDGSAQKPGDVITTYSGITVEVGNTDAEGRLILADALTYAKQEYNPDIIIDLATLTGACIVALGYSVAGLFSNNDKLAEEIYAAGISSGEKVWRMPLWDDYDELIKSEVADVNNTGGRGAGSVTAAKFLEKFIDGHKKWAHLDIAGPAFLSKSGGKVTGGTGFGVRLLIDLLKKWA.

Positions 271 and 276 each coordinate Mn(2+). K283 is a catalytic residue. Mn(2+) contacts are provided by D294, D353, and E355. Residue R357 is part of the active site.

Belongs to the peptidase M17 family. The cofactor is Mn(2+).

Its subcellular location is the cytoplasm. The enzyme catalyses Release of an N-terminal amino acid, Xaa-|-Yaa-, in which Xaa is preferably Leu, but may be other amino acids including Pro although not Arg or Lys, and Yaa may be Pro. Amino acid amides and methyl esters are also readily hydrolyzed, but rates on arylamides are exceedingly low.. It catalyses the reaction Release of an N-terminal amino acid, preferentially leucine, but not glutamic or aspartic acids.. In terms of biological role, presumably involved in the processing and regular turnover of intracellular proteins. Catalyzes the removal of unsubstituted N-terminal amino acids from various peptides. This Chlorobium phaeobacteroides (strain DSM 266 / SMG 266 / 2430) protein is Probable cytosol aminopeptidase.